A 151-amino-acid chain; its full sequence is MQIILLEKVANLGNLGEVVRVRDGYARNFLIPQKKARRATDAALKEFEARRAELEKVQAEKLAAAQALAERLNGFQLKISQKAGVDGRLFGSVTNADVAEGLRKAGFEAVEKSQVRMPNGQIKAVGEYPVQAVLHADVVADVVVLVEGEMA.

It belongs to the bacterial ribosomal protein bL9 family.

Binds to the 23S rRNA. This is Large ribosomal subunit protein bL9 from Bordetella bronchiseptica (strain ATCC BAA-588 / NCTC 13252 / RB50) (Alcaligenes bronchisepticus).